Here is a 139-residue protein sequence, read N- to C-terminus: Small ribosomal subunit protein uS11 (139 aa).

Belongs to the universal ribosomal protein uS11 family. In terms of assembly, part of the 30S ribosomal subunit.

In terms of biological role, located on the platform of the 30S subunit. In Pyrobaculum islandicum (strain DSM 4184 / JCM 9189 / GEO3), this protein is Small ribosomal subunit protein uS11.